Consider the following 1058-residue polypeptide: MPKRTDIQKIMVIGSGPIIIGQAAEFDYAGTQACFSLKEEGYEVVLVNSNPATIMTDKEIADKVYIEPITLEFVTRILRKEGPDALLPTLGGQTGLNMAMELSKNGILDELGVELLGTKLSAIDQAEDRDLFKQLMEELEQPIPESEIVNTVEEAVAFAATIGYPVIVRPAFTLGGTGGGMCANEKELREITENGLKLSPVTQCLIERSIAGFKEIEYEVMRDSADNALVVCNMENFDPVGIHTGDSIVFAPAQTMSDYENQMLRDASLSIIRALKIEGGCNVQLALDPNSFKYYVIEVNPRVSRSSALASKATGYPIAKLAAKIAVGLTLDEVINPVTGSTYAMFEPALDYVVAKIPRFPFDKFEKGERRLGTQMKATGEVMAIGRNIEESLLKACRSLEIGVHHNEIPELAAVSDDALIEKVVKAQDDRLFYVSEAIRRGYTPEEIAELTKIDIFYLDKLLHIFEIEQELGAHPQDLEVLKTAKLNGFSDRKIAELWGTTDDKVRQLRLENKIVPVYKMVDTCAAEFDSETPYFYSTYGWENESIRSDKESVLVLGSGPIRIGQGVEFDYATVHSVKAIQAAGYEAIIMNSNPETVSTDFSVSDKLYFEPLTFEDVMNVIDLEQPKGVIVQFGGQTAINLAEPLAKAGVTILGTQVADLDRAEDRDLFEQALKELDIPQPPGQTATNEEEAALAARKIGFPVLVRPSYVLGGRAMEIVENEEDLRSYMRTAVKASPDHPVLVDSYIVGQECEVDAISDGKNVLIPGIMEHIERAGVHSGDSMAVYPPQTLSQKVQETIADYTKRLAIGLHCLGMMNIQFVIKDEKVYVIEVNPRASRTVPFLSKVTNIPMAQVATKLILGQSLSELGYQNGLYPESTRVHIKAPVFSFTKLAKVDSLLGPEMKSTGEVMGSDATLEKALYKAFEASYLHLPTFGNVVFTIADDAKEEALNLARRFQNIGYGILATEGTAAFFASHGLQAQPVGKIGDDDKDIPSFVRKGRIQAIINTVGTKRTADEDGEQIRRSAIEHGVPLFTALDTANAMLKVLESRSFVTEAI.

The segment at 1–401 (MPKRTDIQKI…SLLKACRSLE (401 aa)) is carboxyphosphate synthetic domain. 12 residues coordinate ATP: Arg129, Arg169, Gly175, Gly176, Arg208, Ile210, Glu215, Gly241, Ile242, His243, Gln284, and Glu298. Residues 133–327 (KQLMEELEQP…IAKLAAKIAV (195 aa)) form the ATP-grasp 1 domain. 3 residues coordinate Mg(2+): Gln284, Glu298, and Asn300. Positions 284, 298, and 300 each coordinate Mn(2+). Residues 402–546 (IGVHHNEIPE…YSTYGWENES (145 aa)) are oligomerization domain. The segment at 547-929 (IRSDKESVLV…ALYKAFEASY (383 aa)) is carbamoyl phosphate synthetic domain. One can recognise an ATP-grasp 2 domain in the interval 671 to 861 (EQALKELDIP…MAQVATKLIL (191 aa)). 10 residues coordinate ATP: Arg707, Ser746, Ile748, Glu752, Gly777, Val778, His779, Ser780, Gln820, and Glu832. Residues Gln820, Glu832, and Asn834 each coordinate Mg(2+). Residues Gln820, Glu832, and Asn834 each contribute to the Mn(2+) site. In terms of domain architecture, MGS-like spans 930–1058 (LHLPTFGNVV…ESRSFVTEAI (129 aa)). Residues 930–1058 (LHLPTFGNVV…ESRSFVTEAI (129 aa)) form an allosteric domain region.

Belongs to the CarB family. In terms of assembly, composed of two chains; the small (or glutamine) chain promotes the hydrolysis of glutamine to ammonia, which is used by the large (or ammonia) chain to synthesize carbamoyl phosphate. Tetramer of heterodimers (alpha,beta)4. Requires Mg(2+) as cofactor. It depends on Mn(2+) as a cofactor.

The enzyme catalyses hydrogencarbonate + L-glutamine + 2 ATP + H2O = carbamoyl phosphate + L-glutamate + 2 ADP + phosphate + 2 H(+). It catalyses the reaction hydrogencarbonate + NH4(+) + 2 ATP = carbamoyl phosphate + 2 ADP + phosphate + 2 H(+). Its pathway is amino-acid biosynthesis; L-arginine biosynthesis; carbamoyl phosphate from bicarbonate: step 1/1. It participates in pyrimidine metabolism; UMP biosynthesis via de novo pathway; (S)-dihydroorotate from bicarbonate: step 1/3. Large subunit of the glutamine-dependent carbamoyl phosphate synthetase (CPSase). CPSase catalyzes the formation of carbamoyl phosphate from the ammonia moiety of glutamine, carbonate, and phosphate donated by ATP, constituting the first step of 2 biosynthetic pathways, one leading to arginine and/or urea and the other to pyrimidine nucleotides. The large subunit (synthetase) binds the substrates ammonia (free or transferred from glutamine from the small subunit), hydrogencarbonate and ATP and carries out an ATP-coupled ligase reaction, activating hydrogencarbonate by forming carboxy phosphate which reacts with ammonia to form carbamoyl phosphate. In Streptococcus pneumoniae (strain ATCC BAA-255 / R6), this protein is Carbamoyl phosphate synthase large chain.